The following is a 521-amino-acid chain: Probable methylmalonate-semialdehyde/malonate-semialdehyde dehydrogenase [acylating], mitochondrial (521 aa).

The NAD(+) site is built by Ala170, Phe172, Lys196, Glu199, Arg200, and Ser249. Cys304 acts as the Nucleophile in catalysis. Glu404 contributes to the NAD(+) binding site.

The protein belongs to the aldehyde dehydrogenase family. As to quaternary structure, homotetramer.

It localises to the mitochondrion. The catalysed reaction is 2-methyl-3-oxopropanoate + NAD(+) + CoA + H2O = propanoyl-CoA + hydrogencarbonate + NADH + H(+). The enzyme catalyses 3-oxopropanoate + NAD(+) + CoA + H2O = hydrogencarbonate + acetyl-CoA + NADH + H(+). In terms of biological role, probable malonate and methylmalonate semialdehyde dehydrogenase involved in the catabolism of valine, thymine, and compounds catabolized by way of beta-alanine, including uracil and cytidine. This Anopheles gambiae (African malaria mosquito) protein is Probable methylmalonate-semialdehyde/malonate-semialdehyde dehydrogenase [acylating], mitochondrial.